We begin with the raw amino-acid sequence, 298 residues long: Ethanolamine ammonia-lyase small subunit (298 aa).

A targets protein to the BMC region spans residues 1-19 (MDQKQIEEIVRSVMASMGQ). V210, E231, and C261 together coordinate adenosylcob(III)alamin.

The protein belongs to the EutC family. As to quaternary structure, the basic unit is a heterodimer which dimerizes to form tetramers. The heterotetramers trimerize; 6 large subunits form a core ring with 6 small subunits projecting outwards. Interacts with EutS, which targets it to the interior of the BMC. It depends on adenosylcob(III)alamin as a cofactor.

The protein localises to the bacterial microcompartment. The catalysed reaction is ethanolamine = acetaldehyde + NH4(+). The protein operates within amine and polyamine degradation; ethanolamine degradation. Functionally, catalyzes the deamination of various vicinal amino-alcohols to oxo compounds. It is spontaneously inactivated by its substrate and reactivated by EutA. May play a role in bacterial microcompartment (BMC) assembly or maintenance. Directly targeted to the BMC. Its function is as follows. Expression of the eut operon allows this bacteria to use ethanolamine (EA) as a carbon, nitrogen and energy source. It relies on cobalamin (vitamin B12) both as a cofactor for the ethanolamine ammonia-lyase activity and to induce the operon. EA enhances bacterial survival in macrophages in a concentration-dependent manner, suggesting it is an important nutrient during infection. This Salmonella typhimurium (strain LT2 / SGSC1412 / ATCC 700720) protein is Ethanolamine ammonia-lyase small subunit.